A 411-amino-acid chain; its full sequence is Arginine deiminase (411 aa).

The Amidino-cysteine intermediate role is filled by cysteine 401.

This sequence belongs to the arginine deiminase family. Post-translationally, glycosylated.

The protein localises to the cytoplasm. The catalysed reaction is L-arginine + H2O = L-citrulline + NH4(+). The protein operates within amino-acid degradation; L-arginine degradation via ADI pathway; carbamoyl phosphate from L-arginine: step 1/2. The chain is Arginine deiminase from Streptococcus pyogenes serotype M3 (strain ATCC BAA-595 / MGAS315).